Here is a 535-residue protein sequence, read N- to C-terminus: Sodium/hydrogen exchanger 9B2 (535 aa).

Residues 1–14 (MRNQDKRAAHKDSE) are compositionally biased toward basic and acidic residues. A disordered region spans residues 1–70 (MRNQDKRAAH…TPAEPNHLQR (70 aa)). The Cytoplasmic portion of the chain corresponds to 1–85 (MRNQDKRAAH…ACPPRGLLAR (85 aa)). Polar residues-rich tracts occupy residues 16–34 (STEV…QETG) and 46–58 (TEGS…NEKM). A helical transmembrane segment spans residues 86-103 (VITNVTMVILLWAVVWSV). Residues 104–112 (TGSECLPGG) are Extracellular-facing. The chain crosses the membrane as a helical span at residues 113-132 (NLFGIIMLFYCAIIGGKLFG). The Cytoplasmic segment spans residues 133–143 (LIKLPTLPPLP). The chain crosses the membrane as a helical span at residues 144 to 160 (PLLGMLLAGFLIRNVPV). Residues 161–170 (ISDNIQIKHK) are Extracellular-facing. The helical transmembrane segment at 171 to 188 (WSSALRSIALSVILVRAG) threads the bilayer. Residues 189-199 (LGLDSNALKKL) are Cytoplasmic-facing. Residues 200-226 (KGVCVRLSLGPCLIEACTSAVLAYFLM) traverse the membrane as a helical segment. Over 227-232 (GLPWQW) the chain is Extracellular. The helical transmembrane segment at 233 to 241 (GFMLGFVLG) threads the bilayer. The Cytoplasmic segment spans residues 242 to 269 (AVSPAVVVPSMLLLQEGGYGVEKGIPTL). Na(+) contacts are provided by Val-243, Gly-274, Asp-277, and Asp-278. Residues 270-289 (LMAAGSFDDILAITGFNTCL) traverse the membrane as a helical segment. The Extracellular segment spans residues 290-299 (GMAFSTGSTV). The chain crosses the membrane as a helical span at residues 300-323 (FNVLKGVLEVIIGVVTGLVLGFFI). Topologically, residues 324 to 338 (QYFPSSDQDNLVWKR) are cytoplasmic. The helical transmembrane segment at 339-356 (AFLVLGLSVLAVFSSTYF) threads the bilayer. Over 357 to 360 (GFPG) the chain is Extracellular. The helical transmembrane segment at 361–372 (SGGLCTLVTAFL) threads the bilayer. Topologically, residues 373-389 (AGRGWASTKTDVEKVIA) are cytoplasmic. A helical transmembrane segment spans residues 390 to 410 (VAWDIFQPLLFGLIGAEVLIT). Over 411-416 (ALRPET) the chain is Extracellular. Residues 417-439 (IGLCVATLGIAVLIRILVTYLMV) traverse the membrane as a helical segment. Residues 440-460 (CFAGFNIKEKIFISFAWLPKA) are Cytoplasmic-facing. A helical membrane pass occupies residues 461 to 472 (TVQAAIGSVALD). Residues 473–485 (TARSHGEKQLEGY) are Extracellular-facing. A helical transmembrane segment spans residues 486–508 (GMDVLTVAFLSIIITAPVGSLLI). Residues 509–535 (GLLGPRLLQKAEQNKDEEDQGETSIQV) are Cytoplasmic-facing.

It belongs to the monovalent cation:proton antiporter 1 (CPA1) transporter (TC 2.A.36) family. Homodimer; dimerization is essential for SLC9B2 activity. Lipids seem to play a role in the stabilization of the dimerization subdomain.

Its subcellular location is the cell membrane. The protein localises to the mitochondrion membrane. The protein resides in the endosome membrane. It localises to the recycling endosome membrane. It is found in the lysosome membrane. Its subcellular location is the cytoplasmic vesicle. The protein localises to the secretory vesicle. The protein resides in the synaptic vesicle membrane. It localises to the cell projection. It is found in the cilium. Its subcellular location is the flagellum membrane. The protein localises to the basolateral cell membrane. The protein resides in the apical cell membrane. The enzyme catalyses Li(+)(out) + H(+)(in) = Li(+)(in) + H(+)(out). The catalysed reaction is Li(+)(in) + Na(+)(out) = Li(+)(out) + Na(+)(in). It catalyses the reaction Na(+)(in) + H(+)(out) = Na(+)(out) + H(+)(in). Its activity is regulated as follows. Allosterically inhibited by the N-terminal domain. Inhibited by phloretin. Functionally, electroneutral Na(+) Li(+)/H(+) antiporter that extrudes Na(+) or Li(+) in exchange for external protons across the membrane. Uses the proton gradient/membrane potential to extrude sodium. Contributes to the regulation of intracellular pH and sodium homeostasis. Also able to mediate Na(+)/Li(+) antiporter activity in kidney. May play a physiological role in renal tubular function and blood pressure homeostasis. Plays an important role for insulin secretion and clathrin-mediated endocytosis in beta-cells. Involved in sperm motility and fertility. It is controversial whether SLC9B2 plays a role in osteoclast differentiation or not. This Bison bison bison (North American plains bison) protein is Sodium/hydrogen exchanger 9B2 (SLC9B2).